Reading from the N-terminus, the 302-residue chain is Protein transport protein SEC13 homolog B (302 aa).

WD repeat units lie at residues 9-48 (GHED…GSQQ), 54-95 (GHRG…QWTQ), 101-142 (DHKS…GWDT), 148-201 (AHPV…WKMD), 208-251 (KHTD…EQWE), and 257-296 (DFMT…EWEQ).

The protein belongs to the WD repeat SEC13 family. Part of the nuclear pore complex (NPC). The NPC has an eight-fold symmetrical structure comprising a central transport channel and two rings, the cytoplasmic and nuclear rings, to which eight filaments are attached. The cytoplasmic filaments have loose ends, while the nuclear filaments are joined in a distal ring, forming a nuclear basket. NPCs are highly dynamic in configuration and composition, and can be devided in 3 subcomplexes, the NUP62 subcomplex, the NUP107-160 subcomplex and the NUP93 subcomplex, containing approximately 30 different nucleoporin proteins. Interacts with MAG5, SEC31A and SEC31B.

It is found in the golgi apparatus. Its subcellular location is the endoplasmic reticulum. It localises to the nucleus envelope. The protein localises to the nucleus. The protein resides in the nuclear pore complex. In terms of biological role, required for protein transport from the endoplasmic reticulum to the Golgi apparatus. The polypeptide is Protein transport protein SEC13 homolog B (Arabidopsis thaliana (Mouse-ear cress)).